The following is a 244-amino-acid chain: Chalcone--flavanone isomerase (244 aa).

T57, N122, and S199 together coordinate substrate.

The protein belongs to the chalcone isomerase family.

It carries out the reaction a chalcone = a flavanone.. Its pathway is secondary metabolite biosynthesis; flavonoid biosynthesis. Its function is as follows. Catalyzes the intramolecular cyclization of bicyclic chalcones into tricyclic (S)-flavanones. Responsible for the isomerization of 4,2',4',6'-tetrahydroxychalcone (also termed chalcone) into naringenin. In Arabidopsis lyrata subsp. petraea (Northern rock-cress), this protein is Chalcone--flavanone isomerase (CHI).